Reading from the N-terminus, the 177-residue chain is Probable DNA-directed RNA polymerase subunit delta (177 aa).

In terms of domain architecture, HTH HARE-type spans 14-81; it reads CSMIEVVHSV…GENRWGLRSW (68 aa). The segment at 91–177 is disordered; that stretch reads ILPQPKPKKK…DETEEEEEEL (87 aa). A compositionally biased stretch (acidic residues) spans 106-177; the sequence is DGFDDYIEED…DETEEEEEEL (72 aa).

It belongs to the RpoE family. RNAP is composed of a core of 2 alpha, a beta and a beta' subunits. The core is associated with a delta subunit and one of several sigma factors.

Participates in both the initiation and recycling phases of transcription. In the presence of the delta subunit, RNAP displays an increased specificity of transcription, a decreased affinity for nucleic acids, and an increased efficiency of RNA synthesis because of enhanced recycling. This is Probable DNA-directed RNA polymerase subunit delta from Bacillus cereus (strain G9842).